Here is a 209-residue protein sequence, read N- to C-terminus: Uracil phosphoribosyltransferase (209 aa).

Residues Arg79, Arg104, and 131 to 139 each bind 5-phospho-alpha-D-ribose 1-diphosphate; that span reads DPMLATGGS. Residues Ile194 and 199–201 each bind uracil; that span reads GDA. Residue Asp200 coordinates 5-phospho-alpha-D-ribose 1-diphosphate.

Belongs to the UPRTase family. Mg(2+) is required as a cofactor.

The catalysed reaction is UMP + diphosphate = 5-phospho-alpha-D-ribose 1-diphosphate + uracil. It functions in the pathway pyrimidine metabolism; UMP biosynthesis via salvage pathway; UMP from uracil: step 1/1. Its activity is regulated as follows. Allosterically activated by GTP. Functionally, catalyzes the conversion of uracil and 5-phospho-alpha-D-ribose 1-diphosphate (PRPP) to UMP and diphosphate. In Exiguobacterium sp. (strain ATCC BAA-1283 / AT1b), this protein is Uracil phosphoribosyltransferase.